Here is a 58-residue protein sequence, read N- to C-terminus: Large ribosomal subunit protein eL20 (58 aa).

The tract at residues 37–58 (TTVGSQHNRKRPQIEIKEVSAA) is disordered. The segment covering 48-58 (PQIEIKEVSAA) has biased composition (basic and acidic residues).

It belongs to the eukaryotic ribosomal protein eL20 family. Part of the 50S ribosomal subunit. Binds 23S rRNA.

The protein is Large ribosomal subunit protein eL20 of Halorubrum lacusprofundi (strain ATCC 49239 / DSM 5036 / JCM 8891 / ACAM 34).